A 798-amino-acid chain; its full sequence is Interphotoreceptor matrix proteoglycan 1 (798 aa).

The N-terminal stretch at 1-20 is a signal peptide; the sequence is MNLEIKHAILVLWIFLQVQG. An N-linked (GlcNAc...) asparagine glycan is attached at N142. One can recognise an SEA 1 domain in the interval 238–360; that stretch reads SEEKVEFSIS…PEAYLTAADL (123 aa). O-linked (GalNAc...) threonine glycosylation is found at T442 and T445. Residues 574–687 enclose the SEA 2 domain; it reads HELVVFFSLR…YSLDIEPADQ (114 aa). N-linked (GlcNAc...) asparagine glycans are attached at residues N595 and N619. The Heparin- and hyaluronan-binding motif lies at 624–632; the sequence is KQLEILSFR. N-linked (GlcNAc...) asparagine glycosylation is found at N633 and N651. The interval 741-798 is disordered; that stretch reads ASQGQATPCRPPDHSTNQARQPSVKKLQRQQNKVVKKRNSELSATDFEELDDQDWEGN. The span at 786–798 shows a compositional bias: acidic residues; sequence DFEELDDQDWEGN.

Highly glycosylated (N- and O-linked carbohydrates and sialic acid).

It localises to the cell projection. The protein localises to the cilium. It is found in the photoreceptor outer segment. Its subcellular location is the secreted. The protein resides in the extracellular space. It localises to the extracellular matrix. The protein localises to the interphotoreceptor matrix. It is found in the photoreceptor inner segment. Functionally, chondroitin sulfate-, heparin- and hyaluronan-binding protein. May serve to form a basic macromolecular scaffold comprising the insoluble interphotoreceptor matrix. In Rattus norvegicus (Rat), this protein is Interphotoreceptor matrix proteoglycan 1.